We begin with the raw amino-acid sequence, 257 residues long: Glutamate racemase (257 aa).

Substrate is bound by residues 12–13 (DS) and 44–45 (YG). Catalysis depends on cysteine 75, which acts as the Proton donor/acceptor. 76–77 (NT) lines the substrate pocket. Cysteine 185 (proton donor/acceptor) is an active-site residue. 186 to 187 (TH) contacts substrate.

This sequence belongs to the aspartate/glutamate racemases family.

It catalyses the reaction L-glutamate = D-glutamate. Its pathway is cell wall biogenesis; peptidoglycan biosynthesis. In terms of biological role, provides the (R)-glutamate required for cell wall biosynthesis. This Clostridium botulinum (strain Langeland / NCTC 10281 / Type F) protein is Glutamate racemase.